The sequence spans 941 residues: Cilia- and flagella-associated protein 69 (941 aa).

Positions 1-14 are enriched in low complexity; it reads MWTEEAGATAEAQE. The tract at residues 1–26 is disordered; the sequence is MWTEEAGATAEAQESGIRNKSSSSSQ. The span at 16-26 shows a compositional bias: polar residues; that stretch reads GIRNKSSSSSQ.

As to expression, highly expressed in the testis, specifically in sperm (at protein level). Expressed in the brain, kidney, liver, lung, and intestine.

It is found in the cell projection. The protein resides in the cilium. It localises to the flagellum. Cilium- and flagellum-associated protein. In the olfactory epithelium, regulates the speed of activation and termination of the odor response and thus contributes to the robustness of olfactory transduction pathways. Required for sperm flagellum assembly and stability. This chain is Cilia- and flagella-associated protein 69, found in Homo sapiens (Human).